The sequence spans 318 residues: Dehydrogenase/reductase SDR family member 7C-B (318 aa).

An N-terminal signal peptide occupies residues 1-32; that stretch reads MGMSDIMWLDVSWAWLVLTAVLLAAAVFYLYT. NAD(+) is bound at residue 49–73; the sequence is LITDSLSTVGNECAKLFHAGGARLI. A substrate-binding site is contributed by serine 186. Catalysis depends on tyrosine 199, which acts as the Proton acceptor.

The protein belongs to the short-chain dehydrogenases/reductases (SDR) family.

The protein resides in the secreted. Functionally, putative oxidoreductase. In Danio rerio (Zebrafish), this protein is Dehydrogenase/reductase SDR family member 7C-B (dhrs7cb).